A 221-amino-acid polypeptide reads, in one-letter code: Fructokinase (221 aa).

It belongs to the carbohydrate kinase PfkB family.

The catalysed reaction is D-fructose + ATP = D-fructose 6-phosphate + ADP + H(+). The sequence is that of Fructokinase (scrK) from Salmonella thompson.